The chain runs to 91 residues: Protein YchS (91 aa).

This Escherichia coli O157:H7 protein is Protein YchS (ychS).